The sequence spans 365 residues: Peptide chain release factor 2 (365 aa).

Gln251 bears the N5-methylglutamine mark.

The protein belongs to the prokaryotic/mitochondrial release factor family. Methylated by PrmC. Methylation increases the termination efficiency of RF2.

It localises to the cytoplasm. In terms of biological role, peptide chain release factor 2 directs the termination of translation in response to the peptide chain termination codons UGA and UAA. In Campylobacter jejuni subsp. jejuni serotype O:23/36 (strain 81-176), this protein is Peptide chain release factor 2.